Reading from the N-terminus, the 613-residue chain is Chaperone protein DnaK (613 aa).

Position 173 is a phosphothreonine; by autocatalysis (Thr173). The segment at 577 to 613 (AKQAQAQQEGGAEGAQKADDNVVDAEYEEVNDDQEKK) is disordered. The segment covering 597 to 613 (NVVDAEYEEVNDDQEKK) has biased composition (acidic residues).

Belongs to the heat shock protein 70 family.

Acts as a chaperone. The sequence is that of Chaperone protein DnaK from Bacillus pumilus (strain SAFR-032).